The sequence spans 432 residues: Cyclic GMP-AMP synthase (432 aa).

110-115 (QGSFQY) provides a ligand contact to GTP. Mg(2+)-binding residues include Asp129 and Asp131. An ATP-binding site is contributed by Arg180. Asp191 provides a ligand contact to Mg(2+). Residue Ser255 participates in ATP binding. The GTP site is built by Lys283, Ser297, and Asp344. Residues 413-432 (LNAPSKEPSSKPINKTMVSG) are disordered. The span at 423-432 (KPINKTMVSG) shows a compositional bias: polar residues.

It belongs to the CD-NTase family. A01 subfamily. Requires Mg(2+) as cofactor.

The catalysed reaction is GTP + ATP = 3',3'-cGAMP + 2 diphosphate. Cyclic nucleotide synthase (second messenger synthase) of a CBASS antivirus system. CBASS (cyclic oligonucleotide-based antiphage signaling system) provides immunity against bacteriophage. The CD-NTase protein synthesizes cyclic nucleotides in response to infection; these serve as specific second messenger signals. The signals activate a diverse range of effectors, leading to bacterial cell death and thus abortive phage infection. A type II-C(GA) CBASS system. Its function is as follows. Catalyzes the synthesis of 3'3'-cyclic GMP-AMP (3'3'-cGAMP) from GTP and ATP, a second messenger in cell signal transduction. Is also able to produce c-di-AMP and c-di-GMP from ATP and GTP, respectively; however, 3'3'-cGAMP is the dominant molecule produced by DncV in vivo, contrary to the 2'3'-cGAMP produced by eukaryotes. By producing cGAMP, down-regulates csgD expression and expression of flagellum regulon genes, which leads to the down-regulation of rdar biofilm formation and flagellum-mediated swimming and swarming motility in a temperature-dependent manner. Controls the activity of cGAMP-activated phospholipase CapV, a patatin-like lipase that is a direct 3',3'-cGAMP receptor encoded in the dncV operon. In Escherichia coli, this protein is Cyclic GMP-AMP synthase.